Reading from the N-terminus, the 246-residue chain is Transcription factor A, mitochondrial (246 aa).

The N-terminal 42 residues, 1–42 (MALLRGVWGVLSALGKSGADLCAVCGSRLRSPFSFAYVPRWF), are a transit peptide targeting the mitochondrion. Residues 50-118 (PKKPMTSYVR…VYKEEVNRIQ (69 aa)) constitute a DNA-binding region (HMG box 1). A phosphoserine; by PKA mark is found at Ser56 and Ser61. Thr122 is subject to Phosphothreonine. The segment at residues 155 to 219 (PKRPRSAYNI…RYYNEMKSWE (65 aa)) is a DNA-binding region (HMG box 2). Ser160 is subject to Phosphoserine; by PKA. 2 positions are modified to phosphoserine: Ser193 and Ser195.

As to quaternary structure, monomer; binds DNA as a monomer. Homodimer. Component of the mitochondrial transcription initiation complex, composed at least of TFB2M, TFAM and POLRMT. In this complex TFAM recruits POLRMT to the promoter whereas TFB2M induces structural changes in POLRMT to enable promoter opening and trapping of the DNA non-template strand. Upon metabolic stress, forms a complex composed of FOXO3, SIRT3, TFAM and POLRMT. Interacts with TFB1M and TFB2M. Interacts with CLPX; this enhances DNA-binding. In terms of processing, phosphorylation by PKA within the HMG box 1 impairs DNA binding and promotes degradation by the AAA+ Lon protease.

It localises to the mitochondrion. It is found in the mitochondrion matrix. Its subcellular location is the mitochondrion nucleoid. Functionally, binds to the mitochondrial light strand promoter and functions in mitochondrial transcription regulation. Component of the mitochondrial transcription initiation complex, composed at least of TFB2M, TFAM and POLRMT that is required for basal transcription of mitochondrial DNA. In this complex, TFAM recruits POLRMT to a specific promoter whereas TFB2M induces structural changes in POLRMT to enable promoter opening and trapping of the DNA non-template strand. Required for accurate and efficient promoter recognition by the mitochondrial RNA polymerase. Promotes transcription initiation from the HSP1 and the light strand promoter by binding immediately upstream of transcriptional start sites. Is able to unwind DNA. Bends the mitochondrial light strand promoter DNA into a U-turn shape via its HMG boxes. Required for maintenance of normal levels of mitochondrial DNA. May play a role in organizing and compacting mitochondrial DNA. The protein is Transcription factor A, mitochondrial of Sus scrofa (Pig).